A 593-amino-acid polypeptide reads, in one-letter code: MLO-like protein 8 (593 aa).

The Extracellular portion of the chain corresponds to 1–46 (MGIIDGSLLRRLICLCLWCLLGGGVTVVTAEDEKKVVHKQLNQTPT). A helical membrane pass occupies residues 47–67 (WAVAAVCTFFIVVSVLLEKLL). At 68–92 (HKVGKVLWDRHKTALLDALEKIKAE) the chain is on the cytoplasmic side. The helical transmembrane segment at 93–113 (LMVLGFISLLLTFGQTYILDI) threads the bilayer. The Extracellular segment spans residues 114–181 (CIPSHVARTM…ISAEALHQLH (68 aa)). Residues 182 to 202 (ILIFFLAIFHVLYSFLTMMLG) form a helical membrane-spanning segment. At 203 to 304 (RLKIRGWKHW…IKRSLEDDFK (102 aa)) the chain is on the cytoplasmic side. Residues 305–325 (VVVGVSPVLWGSFVLFLLLNI) traverse the membrane as a helical segment. Position 326 (Asp-326) is a topological domain, extracellular. A helical transmembrane segment spans residues 327–347 (GFKMMFIGTAIPVIIILAVGT). At 348 to 393 (KLQAIMTRMALGITDRHAVVQGMPLVQGNDEYFWFGRPHLILHLMH) the chain is on the cytoplasmic side. Residues 394–414 (FALFQNAFQITYFFWIWYSFG) form a helical membrane-spanning segment. At 415 to 430 (SDSCYHPNFKIALVKV) the chain is on the extracellular side. Residues 431 to 451 (AIALGVLCLCSYITLPLYALV) traverse the membrane as a helical segment. Residues 452 to 593 (TQMGSRMKKS…APSNESSQDR (142 aa)) lie on the Cytoplasmic side of the membrane. The interval 465–486 (EQTSKALKKWRMAVKKKKGVKA) is calmodulin-binding. Positions 481-593 (KKGVKATTKR…APSNESSQDR (113 aa)) are disordered. The span at 489–512 (KRLGGDGSASPTASTVRSTSSVRS) shows a compositional bias: low complexity. Residues 528 to 539 (LDPETSDLDTDN) show a composition bias toward acidic residues. Basic and acidic residues predominate over residues 567-579 (TSRDTETDSKEFS).

This sequence belongs to the MLO family.

It is found in the membrane. In terms of biological role, may be involved in modulation of pathogen defense and leaf cell death. Activity seems to be regulated by Ca(2+)-dependent calmodulin binding and seems not to require heterotrimeric G proteins. This is MLO-like protein 8 (MLO8) from Arabidopsis thaliana (Mouse-ear cress).